The primary structure comprises 236 residues: MTGYEARLITFGTWMYFVNKEQLARAGFYAIGQEDKVQCFHCGGGLANWKPKEDPWEQHAKWYPGCKYLLEEKGHEYINNIHLTRSLEGALVQTTKKTPSLTKRINDTIFPNPMLQEAIRMGFDFKDVKKIMEERIQTSGSNYKTLEVLVADLVSAQKDTTENESNQTSLQREISPEEPLRRLQDEKLCKICMDRHIAVVFIPCGHLVTCKQCAEAVDRCPMCSAVIDFKQRVFMS.

A BIR repeat occupies 7–70 (RLITFGTWMY…KWYPGCKYLL (64 aa)). Positions 39, 42, 59, and 66 each coordinate Zn(2+). Residues 189–224 (CKICMDRHIAVVFIPCGHLVTCKQCAEAVDRCPMCS) form an RING-type zinc finger.

It belongs to the IAP family. Binds to caspase-9.

The protein resides in the cytoplasm. Functionally, protects against apoptosis mediated by BAX. The sequence is that of Baculoviral IAP repeat-containing protein 8 (BIRC8) from Pan troglodytes (Chimpanzee).